The chain runs to 375 residues: Squamosa promoter-binding-like protein 9 (375 aa).

Disordered regions lie at residues 1-30 and 43-73; these read MEMGSNSGPGHGPGQAESGGSSTESSSFSG and GGGGSGSSSSGGRSNRRVRGGGSGQSGQIPR. The segment covering 18–30 has biased composition (low complexity); sequence SGGSSTESSSFSG. An SBP-type zinc finger spans residues 71-148; sequence IPRCQVEGCG…AGHNERRRKP (78 aa). Cys-74, Cys-79, Cys-96, His-99, Cys-115, Cys-118, His-122, and Cys-134 together coordinate Zn(2+). The short motif at 131-147 is the Bipartite nuclear localization signal element; sequence KRSCRRRLAGHNERRRK. 2 disordered regions span residues 252 to 278 and 345 to 375; these read LLSNPHQPHDNNNNNNNNNNNNNNTWR and SDHHHQSRRQYMEDENTRAYDSSSHHTNWSL. The span at 262–275 shows a compositional bias: low complexity; it reads NNNNNNNNNNNNNN. The segment covering 345–362 has biased composition (basic and acidic residues); that stretch reads SDHHHQSRRQYMEDENTR. Residues 363 to 375 are compositionally biased toward polar residues; that stretch reads AYDSSSHHTNWSL.

Zn(2+) is required as a cofactor.

The protein resides in the nucleus. The protein localises to the cytoplasm. Trans-acting factor that binds specifically to the consensus nucleotide sequence 5'-TNCGTACAA-3'. This chain is Squamosa promoter-binding-like protein 9 (SPL9), found in Arabidopsis thaliana (Mouse-ear cress).